Reading from the N-terminus, the 233-residue chain is Transcriptional regulatory protein NatR (233 aa).

Residues 3–117 form the Response regulatory domain; it reads KVGLVDDYRV…RLAASFDRYL (115 aa). Asp-54 is subject to 4-aspartylphosphate. The HTH LytTR-type domain occupies 129-233; the sequence is ILIKQKSEMH…QLDYFQNYYF (105 aa).

Phosphorylated by NatK.

It is found in the cytoplasm. Functionally, member of the two-component regulatory system NatK/NatR that positively regulates the expression of the natAB operon. Acts by binding directly to the promoter of natAB. This Bacillus subtilis (strain 168) protein is Transcriptional regulatory protein NatR.